A 246-amino-acid polypeptide reads, in one-letter code: Cell division protein ZapD (246 aa).

It belongs to the ZapD family. Interacts with FtsZ.

It is found in the cytoplasm. Cell division factor that enhances FtsZ-ring assembly. Directly interacts with FtsZ and promotes bundling of FtsZ protofilaments, with a reduction in FtsZ GTPase activity. The chain is Cell division protein ZapD from Vibrio parahaemolyticus serotype O3:K6 (strain RIMD 2210633).